Reading from the N-terminus, the 280-residue chain is Protease HtpX (280 aa).

2 helical membrane-spanning segments follow: residues 7 to 26 and 30 to 49; these read TFILLASLTALLVVIGGLLG and GMLIALVFAGVMNFSAYWYS. Zn(2+) is bound at residue His129. Glu130 is an active-site residue. His133 contributes to the Zn(2+) binding site. 2 helical membrane passes run 146–166 and 178–198; these read ATIAGAISGIANMFMWLSMFG and VVGMIMMIVAPLAAGLIQMAI. Position 203 (Glu203) interacts with Zn(2+).

The protein belongs to the peptidase M48B family. The cofactor is Zn(2+).

It localises to the cell inner membrane. The polypeptide is Protease HtpX (Legionella pneumophila subsp. pneumophila (strain Philadelphia 1 / ATCC 33152 / DSM 7513)).